Consider the following 223-residue polypeptide: Uracil-DNA glycosylase (223 aa).

Catalysis depends on Asp-67, which acts as the Proton acceptor.

Belongs to the uracil-DNA glycosylase (UDG) superfamily. UNG family.

The protein localises to the cytoplasm. The enzyme catalyses Hydrolyzes single-stranded DNA or mismatched double-stranded DNA and polynucleotides, releasing free uracil.. In terms of biological role, excises uracil residues from the DNA which can arise as a result of misincorporation of dUMP residues by DNA polymerase or due to deamination of cytosine. The polypeptide is Uracil-DNA glycosylase (Borreliella burgdorferi (strain ZS7) (Borrelia burgdorferi)).